Consider the following 557-residue polypeptide: Phosphoacetylglucosamine mutase (557 aa).

Residue Ser-67 is the Phosphoserine intermediate of the active site. Mg(2+) contacts are provided by Ser-67, Asp-298, Asp-300, and Asp-302. A Phosphoserine modification is found at Ser-67. Residues Glu-395–Asn-397, Arg-522–Thr-526, and Arg-531 each bind substrate.

This sequence belongs to the phosphohexose mutase family. Mg(2+) is required as a cofactor.

It is found in the cytoplasm. The protein resides in the nucleus. It carries out the reaction N-acetyl-alpha-D-glucosamine 1-phosphate = N-acetyl-D-glucosamine 6-phosphate. The protein operates within nucleotide-sugar biosynthesis; UDP-N-acetyl-alpha-D-glucosamine biosynthesis; N-acetyl-alpha-D-glucosamine 1-phosphate from alpha-D-glucosamine 6-phosphate (route I): step 2/2. Functionally, catalyzes the conversion of GlcNAc-6-P into GlcNAc-1-P during the synthesis of uridine diphosphate/UDP-GlcNAc, which is a biosynthetic precursor of chitin and also supplies the amino sugars for N-linked oligosaccharides of glycoproteins. Also has phosphoglucomutase activity. The chain is Phosphoacetylglucosamine mutase from Saccharomyces cerevisiae (strain ATCC 204508 / S288c) (Baker's yeast).